The chain runs to 62 residues: UPF0434 protein Fphi_1862 (62 aa).

Belongs to the UPF0434 family.

The chain is UPF0434 protein Fphi_1862 from Francisella philomiragia subsp. philomiragia (strain ATCC 25017 / CCUG 19701 / FSC 153 / O#319-036).